The primary structure comprises 673 residues: Protein-arginine deiminase type-2 (673 aa).

Met-1 carries the N-acetylmethionine modification. Residues Asp-131, Asp-133, Asp-135, Glu-139, Asn-162, Asp-164, Asp-166, Asp-174, Asp-177, Lys-179, Asp-185, and Asp-188 each contribute to the Ca(2+) site. The residue at position 352 (Arg-352) is a Citrulline. Ca(2+) contacts are provided by Glu-362, Asp-397, Phe-416, Leu-419, and Glu-420. The active-site Nucleophile is Cys-655.

Belongs to the protein arginine deiminase family. Homodimer. It depends on Ca(2+) as a cofactor. In terms of tissue distribution, expressed in various tissues including muscle, uterus, spinal cord, salivary gland and pancreas.

The protein resides in the cytoplasm. The catalysed reaction is L-arginyl-[protein] + H2O = L-citrullyl-[protein] + NH4(+). Catalyzes the deimination of arginine residues of proteins. The chain is Protein-arginine deiminase type-2 (Padi2) from Mus musculus (Mouse).